Reading from the N-terminus, the 119-residue chain is uncharacterized protein (119 aa).

2 helical membrane-spanning segments follow: residues 52–72 (IVLFVLGFLLLIPWIINVINI) and 88–108 (VLFSLSIAIIVIFVIFFIFLI).

It localises to the membrane. This is an uncharacterized protein from Dictyostelium discoideum (Social amoeba).